The sequence spans 102 residues: Large ribosomal subunit protein bL28 (102 aa).

A disordered region spans residues 1–20 (MSRRCELTAKGPQVGHKVSH).

This sequence belongs to the bacterial ribosomal protein bL28 family.

The chain is Large ribosomal subunit protein bL28 from Bradyrhizobium sp. (strain ORS 278).